Here is a 242-residue protein sequence, read N- to C-terminus: Tryptophan synthase alpha chain (242 aa).

Active-site proton acceptor residues include E31 and D42.

It belongs to the TrpA family. Tetramer of two alpha and two beta chains.

The catalysed reaction is (1S,2R)-1-C-(indol-3-yl)glycerol 3-phosphate + L-serine = D-glyceraldehyde 3-phosphate + L-tryptophan + H2O. Its pathway is amino-acid biosynthesis; L-tryptophan biosynthesis; L-tryptophan from chorismate: step 5/5. The alpha subunit is responsible for the aldol cleavage of indoleglycerol phosphate to indole and glyceraldehyde 3-phosphate. The protein is Tryptophan synthase alpha chain of Staphylococcus aureus (strain USA300).